We begin with the raw amino-acid sequence, 227 residues long: MDQAVELPVQRLQRASLYLCTDARRERGDLAEFADAALAGGVDLIQLRDKGSAGEKQFGPLEARQELEALEILADAARRHGALLAVNDRADIALAAGADVLHLGQDDLPLDVARGIIGRRPVIGRSTHDAAQMAVAIEERVDYFCVGPCWPTPTKPGRPAPGLDLVRATAAHSPGKPWFAIGGIDQERLPEVLAAGARRVVVVRAITAADDPKAAAEDLKAAISAAG.

4-amino-2-methyl-5-(diphosphooxymethyl)pyrimidine-binding positions include 46–50 (QLRDK) and Asn87. Residues Asp88 and Asp107 each contribute to the Mg(2+) site. Ser126 lines the 4-amino-2-methyl-5-(diphosphooxymethyl)pyrimidine pocket. 152–154 (TPT) serves as a coordination point for 2-[(2R,5Z)-2-carboxy-4-methylthiazol-5(2H)-ylidene]ethyl phosphate. Lys155 contacts 4-amino-2-methyl-5-(diphosphooxymethyl)pyrimidine. A 2-[(2R,5Z)-2-carboxy-4-methylthiazol-5(2H)-ylidene]ethyl phosphate-binding site is contributed by Gly183.

This sequence belongs to the thiamine-phosphate synthase family. Mg(2+) serves as cofactor.

The catalysed reaction is 2-[(2R,5Z)-2-carboxy-4-methylthiazol-5(2H)-ylidene]ethyl phosphate + 4-amino-2-methyl-5-(diphosphooxymethyl)pyrimidine + 2 H(+) = thiamine phosphate + CO2 + diphosphate. It carries out the reaction 2-(2-carboxy-4-methylthiazol-5-yl)ethyl phosphate + 4-amino-2-methyl-5-(diphosphooxymethyl)pyrimidine + 2 H(+) = thiamine phosphate + CO2 + diphosphate. The enzyme catalyses 4-methyl-5-(2-phosphooxyethyl)-thiazole + 4-amino-2-methyl-5-(diphosphooxymethyl)pyrimidine + H(+) = thiamine phosphate + diphosphate. It functions in the pathway cofactor biosynthesis; thiamine diphosphate biosynthesis; thiamine phosphate from 4-amino-2-methyl-5-diphosphomethylpyrimidine and 4-methyl-5-(2-phosphoethyl)-thiazole: step 1/1. Functionally, condenses 4-methyl-5-(beta-hydroxyethyl)thiazole monophosphate (THZ-P) and 2-methyl-4-amino-5-hydroxymethyl pyrimidine pyrophosphate (HMP-PP) to form thiamine monophosphate (TMP). The protein is Thiamine-phosphate synthase of Mycolicibacterium smegmatis (strain ATCC 700084 / mc(2)155) (Mycobacterium smegmatis).